Here is a 232-residue protein sequence, read N- to C-terminus: Ubiquinone biosynthesis O-methyltransferase (232 aa).

Residues R36, G55, D76, and L120 each coordinate S-adenosyl-L-methionine.

This sequence belongs to the methyltransferase superfamily. UbiG/COQ3 family.

The catalysed reaction is a 3-demethylubiquinol + S-adenosyl-L-methionine = a ubiquinol + S-adenosyl-L-homocysteine + H(+). The enzyme catalyses a 3-(all-trans-polyprenyl)benzene-1,2-diol + S-adenosyl-L-methionine = a 2-methoxy-6-(all-trans-polyprenyl)phenol + S-adenosyl-L-homocysteine + H(+). It functions in the pathway cofactor biosynthesis; ubiquinone biosynthesis. O-methyltransferase that catalyzes the 2 O-methylation steps in the ubiquinone biosynthetic pathway. The sequence is that of Ubiquinone biosynthesis O-methyltransferase from Pseudomonas putida (strain GB-1).